Reading from the N-terminus, the 375-residue chain is Chaperone protein DnaJ (375 aa).

In terms of domain architecture, J spans 5–68 (DYYEILGVSK…KKRAQYDQFG (64 aa)). The segment at 135–217 (GISKNINYDR…CYGKKVINER (83 aa)) adopts a CR-type zinc-finger fold. Zn(2+) is bound by residues cysteine 148, cysteine 151, cysteine 165, cysteine 168, cysteine 191, cysteine 194, cysteine 205, and cysteine 208. CXXCXGXG motif repeat units follow at residues 148–155 (CHKCQGTG), 165–172 (CTKCHGRG), 191–198 (CHECEGTG), and 205–212 (CEQCYGKK).

This sequence belongs to the DnaJ family. As to quaternary structure, homodimer. The cofactor is Zn(2+).

The protein localises to the cytoplasm. Functionally, participates actively in the response to hyperosmotic and heat shock by preventing the aggregation of stress-denatured proteins and by disaggregating proteins, also in an autonomous, DnaK-independent fashion. Unfolded proteins bind initially to DnaJ; upon interaction with the DnaJ-bound protein, DnaK hydrolyzes its bound ATP, resulting in the formation of a stable complex. GrpE releases ADP from DnaK; ATP binding to DnaK triggers the release of the substrate protein, thus completing the reaction cycle. Several rounds of ATP-dependent interactions between DnaJ, DnaK and GrpE are required for fully efficient folding. Also involved, together with DnaK and GrpE, in the DNA replication of plasmids through activation of initiation proteins. The protein is Chaperone protein DnaJ of Ureaplasma parvum serovar 3 (strain ATCC 700970).